A 494-amino-acid chain; its full sequence is Probable cytochrome P450 518A1 (494 aa).

Residues 1-21 (MSILIILIISIIFYLIFDFLY) form a helical membrane-spanning segment. C438 serves as a coordination point for heme.

The protein belongs to the cytochrome P450 family. The cofactor is heme.

It localises to the membrane. This is Probable cytochrome P450 518A1 (cyp518A1) from Dictyostelium discoideum (Social amoeba).